The chain runs to 552 residues: Hydroxylamine reductase (552 aa).

[2Fe-2S] cluster is bound by residues cysteine 5, cysteine 8, cysteine 20, and cysteine 27. Hybrid [4Fe-2O-2S] cluster-binding residues include histidine 251, glutamate 275, cysteine 319, cysteine 407, cysteine 435, cysteine 460, glutamate 494, and lysine 496. At cysteine 407 the chain carries Cysteine persulfide.

The protein belongs to the HCP family. [2Fe-2S] cluster serves as cofactor. Hybrid [4Fe-2O-2S] cluster is required as a cofactor.

It localises to the cytoplasm. It carries out the reaction A + NH4(+) + H2O = hydroxylamine + AH2 + H(+). In terms of biological role, catalyzes the reduction of hydroxylamine to form NH(3) and H(2)O. The sequence is that of Hydroxylamine reductase from Shigella flexneri.